We begin with the raw amino-acid sequence, 614 residues long: UvrABC system protein C (614 aa).

One can recognise a GIY-YIG domain in the interval 14–91 (TSPGCYIHKD…IKENKPKYNI (78 aa)). A UVR domain is found at 196–231 (NKIIDELKGKMAAAAQTMEFERAAEYRDLIQAIGTL). Positions 595 to 614 (LPQVAEERVDYQTEGNHNKP) are disordered.

This sequence belongs to the UvrC family. As to quaternary structure, interacts with UvrB in an incision complex.

Its subcellular location is the cytoplasm. In terms of biological role, the UvrABC repair system catalyzes the recognition and processing of DNA lesions. UvrC both incises the 5' and 3' sides of the lesion. The N-terminal half is responsible for the 3' incision and the C-terminal half is responsible for the 5' incision. The protein is UvrABC system protein C of Streptococcus pneumoniae (strain Taiwan19F-14).